The chain runs to 142 residues: Large ribosomal subunit protein uL11 (142 aa).

Ala-2 is subject to N,N,N-trimethylalanine. An N6,N6,N6-trimethyllysine mark is found at Lys-4 and Lys-40.

The protein belongs to the universal ribosomal protein uL11 family. In terms of assembly, part of the ribosomal stalk of the 50S ribosomal subunit. Interacts with L10 and the large rRNA to form the base of the stalk. L10 forms an elongated spine to which L12 dimers bind in a sequential fashion forming a multimeric L10(L12)X complex. Post-translationally, one or more lysine residues are methylated.

In terms of biological role, forms part of the ribosomal stalk which helps the ribosome interact with GTP-bound translation factors. The protein is Large ribosomal subunit protein uL11 of Shigella flexneri.